Consider the following 116-residue polypeptide: Acyl-CoA-binding protein homolog 3 (116 aa).

The region spanning 3–92 (LQEKFDAAVE…LNDMFDKIAE (90 aa)) is the ACB domain. An acyl-CoA contacts are provided by residues 34–38 (YSLFK), lysine 60, and tyrosine 79.

Belongs to the ACBP family.

Binds medium- and long-chain acyl-CoA esters with very high affinity and may function as an intracellular carrier of acyl-CoA esters. This chain is Acyl-CoA-binding protein homolog 3 (acbp-3), found in Caenorhabditis elegans.